The primary structure comprises 466 residues: ATP synthase subunit beta (466 aa).

Gly155 to Thr162 is a binding site for ATP.

This sequence belongs to the ATPase alpha/beta chains family. As to quaternary structure, F-type ATPases have 2 components, CF(1) - the catalytic core - and CF(0) - the membrane proton channel. CF(1) has five subunits: alpha(3), beta(3), gamma(1), delta(1), epsilon(1). CF(0) has three main subunits: a(1), b(2) and c(9-12). The alpha and beta chains form an alternating ring which encloses part of the gamma chain. CF(1) is attached to CF(0) by a central stalk formed by the gamma and epsilon chains, while a peripheral stalk is formed by the delta and b chains.

Its subcellular location is the cell inner membrane. It catalyses the reaction ATP + H2O + 4 H(+)(in) = ADP + phosphate + 5 H(+)(out). Its function is as follows. Produces ATP from ADP in the presence of a proton gradient across the membrane. The catalytic sites are hosted primarily by the beta subunits. In Bordetella pertussis (strain Tohama I / ATCC BAA-589 / NCTC 13251), this protein is ATP synthase subunit beta.